The chain runs to 259 residues: Flap endonuclease Xni (259 aa).

Asp109 lines the Mg(2+) pocket. The 5'-3' exonuclease domain maps to 165–255; it reads VKPQQLSDYW…FNLQDLRFTA (91 aa). Positions 176, 187, and 190 each coordinate K(+). The interaction with DNA stretch occupies residues 189–194; it reads GIGPKA.

The protein belongs to the Xni family. Mg(2+) serves as cofactor. It depends on K(+) as a cofactor.

Has flap endonuclease activity. During DNA replication, flap endonucleases cleave the 5'-overhanging flap structure that is generated by displacement synthesis when DNA polymerase encounters the 5'-end of a downstream Okazaki fragment. The polypeptide is Flap endonuclease Xni (Vibrio vulnificus (strain CMCP6)).